We begin with the raw amino-acid sequence, 229 residues long: Ribonuclease HII (229 aa).

An RNase H type-2 domain is found at 34–223 (WPVAGADEAG…LRKVEDGPQM (190 aa)). The a divalent metal cation site is built by Asp-40, Glu-41, and Asp-131.

The protein belongs to the RNase HII family. The cofactor is Mn(2+). It depends on Mg(2+) as a cofactor.

It localises to the cytoplasm. The catalysed reaction is Endonucleolytic cleavage to 5'-phosphomonoester.. Endonuclease that specifically degrades the RNA of RNA-DNA hybrids. The sequence is that of Ribonuclease HII from Rhizobium leguminosarum bv. trifolii (strain WSM2304).